The primary structure comprises 75 residues: Small ribosomal subunit protein bS18 (75 aa).

Belongs to the bacterial ribosomal protein bS18 family. In terms of assembly, part of the 30S ribosomal subunit. Forms a tight heterodimer with protein bS6.

Its function is as follows. Binds as a heterodimer with protein bS6 to the central domain of the 16S rRNA, where it helps stabilize the platform of the 30S subunit. The sequence is that of Small ribosomal subunit protein bS18 from Chromobacterium violaceum (strain ATCC 12472 / DSM 30191 / JCM 1249 / CCUG 213 / NBRC 12614 / NCIMB 9131 / NCTC 9757 / MK).